The chain runs to 160 residues: UPF0178 protein PLES_56411 (160 aa).

It belongs to the UPF0178 family.

The chain is UPF0178 protein PLES_56411 from Pseudomonas aeruginosa (strain LESB58).